Reading from the N-terminus, the 257-residue chain is Succinate dehydrogenase subunit 5, mitochondrial (257 aa).

A mitochondrion-targeting transit peptide spans 1-89; that stretch reads MGTLGRAIHT…AMGMGQVRRF (89 aa).

Component of complex II composed of eight subunits in plants: four classical SDH subunits SDH1, SDH2, SDH3 and SDH4 (a flavoprotein (FP), an iron-sulfur protein (IP), and a cytochrome b composed of a large and a small subunit.), as well as four subunits unknown in mitochondria from bacteria and heterotrophic eukaryotes.

It is found in the mitochondrion inner membrane. Its pathway is carbohydrate metabolism; tricarboxylic acid cycle. In Arabidopsis thaliana (Mouse-ear cress), this protein is Succinate dehydrogenase subunit 5, mitochondrial.